We begin with the raw amino-acid sequence, 86 residues long: Small ribosomal subunit protein bS18 (86 aa).

Residues 1 to 20 form a disordered region; it reads MSREEGNNGRRPGGKMRRSR.

Belongs to the bacterial ribosomal protein bS18 family. In terms of assembly, part of the 30S ribosomal subunit. Forms a tight heterodimer with protein bS6.

Its function is as follows. Binds as a heterodimer with protein bS6 to the central domain of the 16S rRNA, where it helps stabilize the platform of the 30S subunit. This chain is Small ribosomal subunit protein bS18, found in Clostridium beijerinckii (strain ATCC 51743 / NCIMB 8052) (Clostridium acetobutylicum).